A 521-amino-acid polypeptide reads, in one-letter code: Cytochrome P450 1A1 (521 aa).

Residue F229 coordinates substrate. Residue C463 coordinates heme.

Belongs to the cytochrome P450 family. Heme is required as a cofactor.

It is found in the endoplasmic reticulum membrane. The protein resides in the microsome membrane. It carries out the reaction an organic molecule + reduced [NADPH--hemoprotein reductase] + O2 = an alcohol + oxidized [NADPH--hemoprotein reductase] + H2O + H(+). Cytochromes P450 are a group of heme-thiolate monooxygenases. They oxidize a variety of structurally unrelated compounds, including steroids, fatty acids, and xenobiotics. The sequence is that of Cytochrome P450 1A1 (cyp1a1) from Sparus aurata (Gilthead sea bream).